The following is a 437-amino-acid chain: Adenosylmethionine-8-amino-7-oxononanoate aminotransferase (437 aa).

Trp-64 is a substrate binding site. 124–125 (GS) contributes to the pyridoxal 5'-phosphate binding site. Tyr-157 serves as a coordination point for substrate. Residue Asp-254 coordinates pyridoxal 5'-phosphate. 2 residues coordinate substrate: Lys-283 and Gly-316. An N6-(pyridoxal phosphate)lysine modification is found at Lys-283. Pyridoxal 5'-phosphate is bound at residue 317–318 (PT). Arg-400 provides a ligand contact to substrate.

Belongs to the class-III pyridoxal-phosphate-dependent aminotransferase family. BioA subfamily. Homodimer. The cofactor is pyridoxal 5'-phosphate.

The protein resides in the cytoplasm. The enzyme catalyses (8S)-8-amino-7-oxononanoate + S-adenosyl-L-methionine = S-adenosyl-4-methylsulfanyl-2-oxobutanoate + (7R,8S)-7,8-diammoniononanoate. It participates in cofactor biosynthesis; biotin biosynthesis; 7,8-diaminononanoate from 8-amino-7-oxononanoate (SAM route): step 1/1. In terms of biological role, catalyzes the transfer of the alpha-amino group from S-adenosyl-L-methionine (SAM) to 7-keto-8-aminopelargonic acid (KAPA) to form 7,8-diaminopelargonic acid (DAPA). It is the only aminotransferase known to utilize SAM as an amino donor. The polypeptide is Adenosylmethionine-8-amino-7-oxononanoate aminotransferase (bioA) (Mycobacterium tuberculosis (strain CDC 1551 / Oshkosh)).